The following is a 631-amino-acid chain: Mercuric reductase (631 aa).

HMA domains are found at residues 2–66 and 81–145; these read KKYR…YHPG and KKYR…YQPG. A metal cation contacts are provided by C13, C16, C92, and C95. 3 residues coordinate FAD: A181, G201, and T206. An intrachain disulfide couples C207 to C212. Positions 216, 472, and 480 each coordinate FAD. 2 residues coordinate Hg(2+): C628 and C629.

It belongs to the class-I pyridine nucleotide-disulfide oxidoreductase family. In terms of assembly, homodimer. FAD serves as cofactor.

It catalyses the reaction Hg + NADP(+) + H(+) = Hg(2+) + NADPH. Functionally, resistance to Hg(2+) in bacteria appears to be governed by a specialized system which includes mercuric reductase. MerA protein is responsible for volatilizing mercury as Hg(0). In Bacillus cereus, this protein is Mercuric reductase (merA).